The sequence spans 538 residues: Dolichol kinase (538 aa).

The Lumenal portion of the chain corresponds to 1-13 (MTRECPSPAPGPG). A helical transmembrane segment spans residues 14-34 (APLSGSVLAEAAVVFAVVLSI). Over 35-74 (HATVWDRYSWCAVALAVQAFYVQYKWDRLLQQGSAVFQFR) the chain is Cytoplasmic. A helical membrane pass occupies residues 75 to 95 (MSANSGLLPASMVMPLLGLVM). Over 96 to 111 (KERCQTAGNPFFERFG) the chain is Lumenal. The chain crosses the membrane as a helical span at residues 112–132 (IVVAATGMAVALFSSVLALGI). Topologically, residues 133–134 (TR) are cytoplasmic. The helical transmembrane segment at 135 to 155 (PVPTNTCVILGLAGGVIIYIM) threads the bilayer. Residues 156 to 163 (KHSLSVGE) are Lumenal-facing. A helical transmembrane segment spans residues 164-184 (VIEVLEVLLIFVYLNMILLYL). Residues 185–188 (LPRC) are Cytoplasmic-facing. A helical transmembrane segment spans residues 189 to 209 (FTPGEALLVLGGISFVLNQLI). Over 210 to 224 (KRSLTLVESQGDPVD) the chain is Lumenal. A helical membrane pass occupies residues 225–245 (FFLLVVVVGMVLMGIFFSTLF). Topologically, residues 246–254 (VFMDSGTWA) are cytoplasmic. A helical membrane pass occupies residues 255–275 (SSIFFHLMTCVLSLGVVLPWL). The Lumenal segment spans residues 276 to 297 (HRLIRRNPLLWLLQFLFQTDTR). The helical transmembrane segment at 298 to 318 (IYLLAYWSLLATLACLVVLYQ) threads the bilayer. Residues 319–337 (NAKRSSSESKKHQAPTIAR) are Cytoplasmic-facing. A helical membrane pass occupies residues 338–354 (KYFHLIVVATYIPGIIF). Over 355 to 359 (DRPLL) the chain is Lumenal. The helical transmembrane segment at 360–380 (YVAATVCLAVFIFLEYVRYFR) threads the bilayer. The Cytoplasmic segment spans residues 381–401 (IKPLGHTLRSFLSLFLDERDS). The helical transmembrane segment at 402–422 (GPLILTHIYLLLGMSLPIWLI) threads the bilayer. Residues 423–436 (PRPCTQKGSLGGAR) are Lumenal-facing. Residues 437-457 (ALVPYAGVLAVGVGDTVASIF) traverse the membrane as a helical segment. Topologically, residues 458–472 (GSTMGEIRWPGTKKT) are cytoplasmic. Residues 459-474 (STMGEIRWPGTKKTFE) are CTP-binding. A helical membrane pass occupies residues 473–493 (FEGTMTSIFAQIISVALILIF). At 494–495 (DS) the chain is on the lumenal side. Residues 496–516 (GVDLNYSYAWILGSISTVSLL) traverse the membrane as a helical segment. The Cytoplasmic portion of the chain corresponds to 517–538 (EAYTTQIDNLLLPLYLLILLMA).

This sequence belongs to the polyprenol kinase family. As to expression, ubiquitous.

Its subcellular location is the endoplasmic reticulum membrane. The catalysed reaction is a di-trans,poly-cis-dolichol + CTP = a di-trans,poly-cis-dolichyl phosphate + CDP + H(+). The protein operates within protein modification; protein glycosylation. In terms of biological role, catalyzes CTP-mediated phosphorylation of dolichol, the terminal step in de novo dolichyl monophosphate (Dol-P) biosynthesis. Dol-P is a lipid carrier essential for the synthesis of N-linked and O-linked oligosaccharides and for GPI anchors. The polypeptide is Dolichol kinase (DOLK) (Homo sapiens (Human)).